A 376-amino-acid polypeptide reads, in one-letter code: Queuine tRNA-ribosyltransferase (376 aa).

Residue aspartate 93 is the Proton acceptor of the active site. Substrate-binding positions include 93–97 (DSGGF), aspartate 147, glutamine 190, and glycine 217. The tract at residues 248 to 254 (GVGKPDD) is RNA binding. Aspartate 267 (nucleophile) is an active-site residue. 4 residues coordinate Zn(2+): cysteine 305, cysteine 307, cysteine 310, and histidine 336.

This sequence belongs to the queuine tRNA-ribosyltransferase family. As to quaternary structure, homodimer. Within each dimer, one monomer is responsible for RNA recognition and catalysis, while the other monomer binds to the replacement base PreQ1. Zn(2+) is required as a cofactor.

The catalysed reaction is 7-aminomethyl-7-carbaguanine + guanosine(34) in tRNA = 7-aminomethyl-7-carbaguanosine(34) in tRNA + guanine. Its pathway is tRNA modification; tRNA-queuosine biosynthesis. Catalyzes the base-exchange of a guanine (G) residue with the queuine precursor 7-aminomethyl-7-deazaguanine (PreQ1) at position 34 (anticodon wobble position) in tRNAs with GU(N) anticodons (tRNA-Asp, -Asn, -His and -Tyr). Catalysis occurs through a double-displacement mechanism. The nucleophile active site attacks the C1' of nucleotide 34 to detach the guanine base from the RNA, forming a covalent enzyme-RNA intermediate. The proton acceptor active site deprotonates the incoming PreQ1, allowing a nucleophilic attack on the C1' of the ribose to form the product. After dissociation, two additional enzymatic reactions on the tRNA convert PreQ1 to queuine (Q), resulting in the hypermodified nucleoside queuosine (7-(((4,5-cis-dihydroxy-2-cyclopenten-1-yl)amino)methyl)-7-deazaguanosine). The sequence is that of Queuine tRNA-ribosyltransferase from Ruegeria pomeroyi (strain ATCC 700808 / DSM 15171 / DSS-3) (Silicibacter pomeroyi).